Consider the following 506-residue polypeptide: RNA2 polyprotein (506 aa).

Belongs to the nepoviruses RNA2 polyprotein family. Post-translationally, specific enzymatic cleavages in vivo by the P1 encoded 3C-like protease yield mature proteins.

The protein localises to the host cell junction. Its subcellular location is the host plasmodesma. It localises to the virion. In terms of biological role, the movement protein is assembled into tubules that allow the transport of virions from cell to cell. This is RNA2 polyprotein from Beta vulgaris subsp. vulgaris (Beet).